We begin with the raw amino-acid sequence, 208 residues long: Imidazoleglycerol-phosphate dehydratase (208 aa).

Residues 1-22 form a disordered region; the sequence is MTRRAAVKAPRAGAAARRGSVA. Residues 7–19 are compositionally biased toward low complexity; sequence VKAPRAGAAARRG.

Belongs to the imidazoleglycerol-phosphate dehydratase family.

Its subcellular location is the cytoplasm. The catalysed reaction is D-erythro-1-(imidazol-4-yl)glycerol 3-phosphate = 3-(imidazol-4-yl)-2-oxopropyl phosphate + H2O. Its pathway is amino-acid biosynthesis; L-histidine biosynthesis; L-histidine from 5-phospho-alpha-D-ribose 1-diphosphate: step 6/9. The sequence is that of Imidazoleglycerol-phosphate dehydratase from Anaeromyxobacter dehalogenans (strain 2CP-C).